A 168-amino-acid polypeptide reads, in one-letter code: Dihydrofolate reductase (168 aa).

One can recognise a DHFR domain in the interval 1–159 (MISFIFAMDA…YDYEFLMYEK (159 aa)). 5–7 (IFA) is a binding site for substrate. Residues 6–7 (FA) and 14–19 (IGKDND) contribute to the NADP(+) site. Asp27 contributes to the substrate binding site. Residue 43 to 46 (GRKT) coordinates NADP(+). Arg57 lines the substrate pocket. Residues 62–65 (VTSA) and 95–100 (IGGAQL) each bind NADP(+). Residue Thr114 coordinates substrate.

Belongs to the dihydrofolate reductase family.

The catalysed reaction is (6S)-5,6,7,8-tetrahydrofolate + NADP(+) = 7,8-dihydrofolate + NADPH + H(+). Its pathway is cofactor biosynthesis; tetrahydrofolate biosynthesis; 5,6,7,8-tetrahydrofolate from 7,8-dihydrofolate: step 1/1. Functionally, key enzyme in folate metabolism. Catalyzes an essential reaction for de novo glycine and purine synthesis, and for DNA precursor synthesis. The protein is Dihydrofolate reductase (dfrA) of Bacillus subtilis (strain 168).